A 529-amino-acid chain; its full sequence is MTLSPYLQEVAKRRTFAIISHPDAGKTTITEKVLLFGQAIQTAGTVKGRGSSQHAKSDWMEMEKQRGISITTSVMQFPYHDCLVNLLDTPGHEDFSEDTYRTLTAVDCCLMVIDAAKGVEDRTRKLMEVTRLRDTPILTFMNKLDRDIRDPMELLDEVENELKIGCAPITWPIGCGKLFKGVYHLYKDETYLYQTGKGHTIQEVRIVKGLNNPELDAAVGEDLAQQLRDELELVQGASNEFDKDLFLAGEITPVFFGTALGNFGVDHMLDGLVEWAPAPMPRNTDTREVTATEEKFTGFVFKIQANMDPKHRDRVAFMRVVSGKYEKGMKLRQVRIGKDVVISDALTFMAGDRSHVEEAYPGDIIGLHNHGTIQIGDTFTQGEMMKFTGIPNFAPELFRRIRLKDPLKQKQLLKGLVQLSEEGAVQVFRPIANNDLIVGAVGVLQFDVVVARLKSEYNVEAIYESVNVATARWVESTDVKKFEEFKRKNEVQLALDGGDNLTYIAPTMVNLNLTQERYPDVVFRKTREH.

The 270-residue stretch at 11 to 280 (AKRRTFAIIS…GLVEWAPAPM (270 aa)) folds into the tr-type G domain. GTP-binding positions include 20–27 (SHPDAGKT), 88–92 (DTPGH), and 142–145 (NKLD).

This sequence belongs to the TRAFAC class translation factor GTPase superfamily. Classic translation factor GTPase family. PrfC subfamily.

It localises to the cytoplasm. Increases the formation of ribosomal termination complexes and stimulates activities of RF-1 and RF-2. It binds guanine nucleotides and has strong preference for UGA stop codons. It may interact directly with the ribosome. The stimulation of RF-1 and RF-2 is significantly reduced by GTP and GDP, but not by GMP. This is Peptide chain release factor 3 from Klebsiella pneumoniae (strain 342).